The following is a 359-amino-acid chain: 4-hydroxyproline 2-epimerase (359 aa).

Cys126 acts as the Proton acceptor in catalysis. Residues 127 to 128 (GH), His248, and Asp274 each bind substrate. The active-site Proton donor is Cys278. Substrate is bound at residue 279 to 280 (GT).

It belongs to the proline racemase family.

It carries out the reaction trans-4-hydroxy-L-proline = cis-4-hydroxy-D-proline. Catalyzes the epimerization of trans-4-hydroxy-L-proline (t4LHyp) to cis-4-hydroxy-D-proline (c4DHyp). Is likely involved in a degradation pathway that converts t4LHyp to alpha-ketoglutarate. Displays no proline racemase activity. The sequence is that of 4-hydroxyproline 2-epimerase from Planctopirus limnophila (strain ATCC 43296 / DSM 3776 / IFAM 1008 / Mu 290) (Planctomyces limnophilus).